A 155-amino-acid chain; its full sequence is Endoribonuclease YbeY (155 aa).

Zn(2+) is bound by residues histidine 113, histidine 117, and histidine 123.

It belongs to the endoribonuclease YbeY family. The cofactor is Zn(2+).

The protein resides in the cytoplasm. In terms of biological role, single strand-specific metallo-endoribonuclease involved in late-stage 70S ribosome quality control and in maturation of the 3' terminus of the 16S rRNA. The polypeptide is Endoribonuclease YbeY (Ureaplasma urealyticum serovar 10 (strain ATCC 33699 / Western)).